The sequence spans 57 residues: Beta-defensin 3 (57 aa).

A Pyrrolidone carboxylic acid modification is found at Gln-16. 3 cysteine pairs are disulfide-bonded: Cys-24-Cys-53, Cys-31-Cys-46, and Cys-36-Cys-54.

Belongs to the beta-defensin family. Neutrophilic granules.

It is found in the secreted. Functionally, has bactericidal activity. Active against E.coli ML35 and S.aureus 502A. In Bos taurus (Bovine), this protein is Beta-defensin 3 (DEFB3).